The following is a 179-amino-acid chain: uncharacterized protein (179 aa).

This is an uncharacterized protein from Acanthamoeba polyphaga mimivirus (APMV).